We begin with the raw amino-acid sequence, 662 residues long: Protein-arginine deiminase type-1 (662 aa).

Ca(2+) contacts are provided by N153, D155, D157, D164, D175, D178, Q350, E352, K363, D370, S371, N374, F408, and L411. C644 (nucleophile) is an active-site residue.

This sequence belongs to the protein arginine deiminase family. As to quaternary structure, monomer. Ca(2+) serves as cofactor. As to expression, expressed only in the epidermis and uterus.

The protein resides in the cytoplasm. It catalyses the reaction L-arginyl-[protein] + H2O = L-citrullyl-[protein] + NH4(+). Functionally, catalyzes the deimination of arginine residues of proteins. This is Protein-arginine deiminase type-1 (Padi1) from Mus musculus (Mouse).